A 248-amino-acid polypeptide reads, in one-letter code: Acetylglutamate kinase (248 aa).

Residues 41–42, R63, and N155 each bind substrate; that span reads GG.

The protein belongs to the acetylglutamate kinase family. ArgB subfamily.

The protein localises to the cytoplasm. The catalysed reaction is N-acetyl-L-glutamate + ATP = N-acetyl-L-glutamyl 5-phosphate + ADP. It functions in the pathway amino-acid biosynthesis; L-arginine biosynthesis; N(2)-acetyl-L-ornithine from L-glutamate: step 2/4. In terms of biological role, catalyzes the ATP-dependent phosphorylation of N-acetyl-L-glutamate. This is Acetylglutamate kinase from Lactiplantibacillus plantarum (strain ATCC BAA-793 / NCIMB 8826 / WCFS1) (Lactobacillus plantarum).